Here is a 425-residue protein sequence, read N- to C-terminus: MDQLTSAARLMIVSDLDHTMVDHHDAENLSLLRFNALWEANYRDNSLLVFSTGRSPTLYKELRKEKPMLTPDITIMSVGTEITYGNSVVPDDGWEAFLNNKWDRKIVTEETSKFPELTLQSETEQRPHKVSFYVQKDKAQDIMKTLSKRFEERGLDVKIIYSGGMDLDILPQGAGKGQALAYLLKKLKSEGKLPNNTLACGDSGNDAELFSIPDVYGVMVANAQEELLQWHAANAKNNPKVIHATERCAAGIIQAIGHSNLGPSTSPRDVMDLSDCKMENFVPAYEVVKFYLFFEKWRRGEIEHSEHYLSNLKAVCRPSGTFVHPSGVEKSLQECVTLFGTCHGDKQGKQFRIWVDQVLPVQVGSDSWLVSFKKWELSGEDRRCCITTVLLSSKNKTVADGLTWTHVHQTWLNGAAASDSASWFF.

Belongs to the sucrose phosphatase family. Homodimer. Mg(2+) serves as cofactor.

The catalysed reaction is sucrose 6(F)-phosphate + H2O = sucrose + phosphate. It functions in the pathway glycan biosynthesis; sucrose biosynthesis; sucrose from D-fructose 6-phosphate and UDP-alpha-D-glucose: step 2/2. With respect to regulation, inhibited by EDTA. Functionally, catalyzes the final step of sucrose synthesis. The polypeptide is Sucrose-phosphatase 2 (SPP2) (Nicotiana tabacum (Common tobacco)).